Consider the following 384-residue polypeptide: S-adenosylmethionine synthase (384 aa).

ATP is bound at residue His15. Mg(2+) is bound at residue Asp17. Residue Glu43 participates in K(+) binding. L-methionine contacts are provided by Glu56 and Gln99. The interval 99–109 is flexible loop; it reads QSADINQGVDR. ATP is bound by residues 164 to 166, 230 to 231, Asp239, 245 to 246, Ala262, and Lys266; these read DAK, RF, and RK. Asp239 contacts L-methionine. Lys270 is an L-methionine binding site.

Belongs to the AdoMet synthase family. In terms of assembly, homotetramer; dimer of dimers. Mg(2+) serves as cofactor. K(+) is required as a cofactor.

The protein resides in the cytoplasm. It carries out the reaction L-methionine + ATP + H2O = S-adenosyl-L-methionine + phosphate + diphosphate. The protein operates within amino-acid biosynthesis; S-adenosyl-L-methionine biosynthesis; S-adenosyl-L-methionine from L-methionine: step 1/1. Its function is as follows. Catalyzes the formation of S-adenosylmethionine (AdoMet) from methionine and ATP. The overall synthetic reaction is composed of two sequential steps, AdoMet formation and the subsequent tripolyphosphate hydrolysis which occurs prior to release of AdoMet from the enzyme. This chain is S-adenosylmethionine synthase, found in Haemophilus influenzae (strain PittEE).